Here is an 88-residue protein sequence, read N- to C-terminus: Putative membrane protein insertion efficiency factor (88 aa).

It belongs to the UPF0161 family.

The protein resides in the cell inner membrane. Its function is as follows. Could be involved in insertion of integral membrane proteins into the membrane. The protein is Putative membrane protein insertion efficiency factor of Synechococcus sp. (strain CC9311).